The chain runs to 666 residues: Phosphoenolpyruvate carboxykinase (ATP) (666 aa).

2 disordered regions span residues 1–68 (MATP…AHSP) and 91–132 (ASLT…HPAA). The segment covering 48-58 (APTTPNRSAPT) has biased composition (polar residues). The segment covering 109–123 (KGEAAAQGAPSTPRA) has biased composition (low complexity). Position 364–371 (364–371 (GLSGTGKT)) interacts with ATP.

Belongs to the phosphoenolpyruvate carboxykinase (ATP) family.

It localises to the cytoplasm. The catalysed reaction is oxaloacetate + ATP = phosphoenolpyruvate + ADP + CO2. It participates in carbohydrate biosynthesis; gluconeogenesis. The protein is Phosphoenolpyruvate carboxykinase (ATP) of Zea mays (Maize).